Reading from the N-terminus, the 104-residue chain is Large ribosomal subunit protein uL24 (104 aa).

This sequence belongs to the universal ribosomal protein uL24 family. Part of the 50S ribosomal subunit.

Functionally, one of two assembly initiator proteins, it binds directly to the 5'-end of the 23S rRNA, where it nucleates assembly of the 50S subunit. In terms of biological role, one of the proteins that surrounds the polypeptide exit tunnel on the outside of the subunit. In Shewanella sediminis (strain HAW-EB3), this protein is Large ribosomal subunit protein uL24.